We begin with the raw amino-acid sequence, 301 residues long: Acetylglutamate kinase (301 aa).

Substrate contacts are provided by residues 68–69 (GG), arginine 90, and asparagine 195.

The protein belongs to the acetylglutamate kinase family. ArgB subfamily.

It is found in the cytoplasm. It carries out the reaction N-acetyl-L-glutamate + ATP = N-acetyl-L-glutamyl 5-phosphate + ADP. It participates in amino-acid biosynthesis; L-arginine biosynthesis; N(2)-acetyl-L-ornithine from L-glutamate: step 2/4. Catalyzes the ATP-dependent phosphorylation of N-acetyl-L-glutamate. In Pseudomonas fluorescens (strain Pf0-1), this protein is Acetylglutamate kinase.